We begin with the raw amino-acid sequence, 719 residues long: Polyribonucleotide nucleotidyltransferase (719 aa).

Residues Asp-507 and Asp-513 each coordinate Mg(2+). The region spanning 573–633 (PKLELFSVDP…EQIKAAKDYI (61 aa)) is the KH domain. Positions 658–719 (GQEFQGIVKK…NGKISVDLCE (62 aa)) constitute an S1 motif domain.

The protein belongs to the polyribonucleotide nucleotidyltransferase family. Requires Mg(2+) as cofactor.

The protein resides in the cytoplasm. The catalysed reaction is RNA(n+1) + phosphate = RNA(n) + a ribonucleoside 5'-diphosphate. Involved in mRNA degradation. Catalyzes the phosphorolysis of single-stranded polyribonucleotides processively in the 3'- to 5'-direction. This Campylobacter jejuni (strain RM1221) protein is Polyribonucleotide nucleotidyltransferase.